Consider the following 309-residue polypeptide: Tagatose-6-phosphate kinase (309 aa).

The protein belongs to the carbohydrate kinase PfkB family. LacC subfamily.

The catalysed reaction is D-tagatofuranose 6-phosphate + ATP = D-tagatofuranose 1,6-bisphosphate + ADP + H(+). It functions in the pathway carbohydrate metabolism; D-tagatose 6-phosphate degradation; D-glyceraldehyde 3-phosphate and glycerone phosphate from D-tagatose 6-phosphate: step 1/2. The polypeptide is Tagatose-6-phosphate kinase (Streptococcus pneumoniae (strain 70585)).